Here is a 292-residue protein sequence, read N- to C-terminus: Acetylglutamate kinase (292 aa).

Substrate contacts are provided by residues 64–65 (GG), Arg86, and Asn190.

It belongs to the acetylglutamate kinase family. ArgB subfamily.

It localises to the cytoplasm. It carries out the reaction N-acetyl-L-glutamate + ATP = N-acetyl-L-glutamyl 5-phosphate + ADP. The protein operates within amino-acid biosynthesis; L-arginine biosynthesis; N(2)-acetyl-L-ornithine from L-glutamate: step 2/4. Catalyzes the ATP-dependent phosphorylation of N-acetyl-L-glutamate. The chain is Acetylglutamate kinase from Geobacter sp. (strain M21).